Reading from the N-terminus, the 214-residue chain is Adenylate kinase (214 aa).

ATP is bound at residue G10 to T15. Residues S30–V59 are NMP. Residues T31, R36, K57–V59, G85–R88, and Q92 contribute to the AMP site. An LID region spans residues G122–D159. ATP-binding positions include R123 and V132–Y133. 2 residues coordinate AMP: R156 and R167. Position 200 (R200) interacts with ATP.

Belongs to the adenylate kinase family. Monomer.

Its subcellular location is the cytoplasm. The catalysed reaction is AMP + ATP = 2 ADP. The protein operates within purine metabolism; AMP biosynthesis via salvage pathway; AMP from ADP: step 1/1. Functionally, catalyzes the reversible transfer of the terminal phosphate group between ATP and AMP. Plays an important role in cellular energy homeostasis and in adenine nucleotide metabolism. This chain is Adenylate kinase, found in Pectobacterium carotovorum subsp. carotovorum (strain PC1).